The chain runs to 129 residues: Protein PerB (129 aa).

Positive regulatory protein of bfpA, the gene coding for the bundle-forming pilus of EPEC. The sequence is that of Protein PerB (perB) from Escherichia coli O111:H-.